We begin with the raw amino-acid sequence, 449 residues long: Elongation factor 1-alpha (449 aa).

Residues 5–234 enclose the tr-type G domain; the sequence is KQHVSIVVIG…DNCDPPKRPV (230 aa). The tract at residues 14–21 is G1; the sequence is GHVDSGKS. GTP is bound at residue 14-21; that stretch reads GHVDSGKS. At K55 the chain carries N6,N6-dimethyllysine. The G2 stretch occupies residues 70-74; it reads GITID. At K79 the chain carries N6,N6,N6-trimethyllysine. The interval 91–94 is G3; sequence DAPG. GTP contacts are provided by residues 91–95 and 153–156; these read DAPGH and NKMD. Positions 153-156 are G4; the sequence is NKMD. K187 is subject to N6,N6,N6-trimethyllysine. The segment at 194–196 is G5; sequence SGW. At K265 the chain carries N6-methyllysine. N6,N6,N6-trimethyllysine occurs at positions 310 and 400.

It belongs to the TRAFAC class translation factor GTPase superfamily. Classic translation factor GTPase family. EF-Tu/EF-1A subfamily.

Its subcellular location is the cytoplasm. This protein promotes the GTP-dependent binding of aminoacyl-tRNA to the A-site of ribosomes during protein biosynthesis. The sequence is that of Elongation factor 1-alpha from Pyropia yezoensis (Susabi-nori).